A 746-amino-acid chain; its full sequence is Alpha-galactosidase 2 (746 aa).

The signal sequence occupies residues 1–26; that stretch reads MLGAPSPRRLADVLAVTAGLVASVRA. N-linked (GlcNAc...) asparagine glycosylation is found at Asn-43, Asn-156, Asn-180, Asn-188, Asn-360, Asn-427, Asn-446, and Asn-495. The active-site Nucleophile is the Asp-504. The active-site Proton donor is Asp-566. A glycan (N-linked (GlcNAc...) asparagine) is linked at Asn-714.

This sequence belongs to the glycosyl hydrolase 27 family.

It localises to the secreted. It catalyses the reaction Hydrolysis of terminal, non-reducing alpha-D-galactose residues in alpha-D-galactosides, including galactose oligosaccharides, galactomannans and galactolipids.. In terms of biological role, alpha-galactosidase involved in the degradation of simple oligosaccharides like melibiose, raffinose and stachyose, and of polymeric galacto(gluco)mannans. This is Alpha-galactosidase 2 (agl2) from Hypocrea jecorina (Trichoderma reesei).